Consider the following 520-residue polypeptide: MKTTKGGKVMNPTDAYRKQIRKREIKRNKKERQKVREVGILKKDPEQIKDQIRKLDMSKAEGALDKARKHKKRQLEDTLKMVVKKRKEYDEKKKEQGEATTSVMFSHLPPQRRLTGEEDLKPEDSVYYHPTLNPTGAPPPGKPPMYNSSIGLAISSDGASSSSAALSSITESEDSVLVNPPPLPPLPDGDNALSASLPLPPLPPLPPTTGLTLPHSPFPPPPPGPPPKEQDFVRPPLPPPPQLPQSSQPPPPGLSGSQGDGRFPESSDFTFDNRMNANITSVPLLPPPGIPSNESESRPAESNASSFQNANLSKMVAPPPPAPLHQQHQSTFAGAAASLTNFQPDVHPPPGMLRFPPPPPPLDMHPPHPGMFVGHLIPRPPYGPPPGPPPMMRPPLPPGPPPSSFQDGQAMIRPYVPNKPSFVKSAAPTVVRRPLAQHTPELTSMVPASVRVRRESATVTKPKPKTSIASSLSFTPRAMASAATVKVEPAKTSAASKPQSIDDSYTAFLEDMKALGALDG.

3 short sequence motifs (nuclear localization signal) span residues 16-23 (YRKQIRKR), 52-59 (IRKLDMSK), and 71-78 (KKRQLEDT). Positions 83–410 (VKKRKEYDEK…PPSSFQDGQA (328 aa)) are disordered. Basic and acidic residues-rich tracts occupy residues 87–97 (KEYDEKKKEQG) and 114–126 (LTGEEDLKPEDSV). Residues 148 to 168 (SSIGLAISSDGASSSSAALSS) show a composition bias toward low complexity. Pro residues-rich tracts occupy residues 198–207 (PLPPLPPLPP), 216–227 (SPFPPPPPGPPP), and 235–253 (PPLPPPPQLPQSSQPPPPG). Polar residues-rich tracts occupy residues 267 to 281 (SDFTFDNRMNANITS), 300 to 312 (AESNASSFQNANL), and 326 to 343 (QQHQSTFAGAAASLTNFQ). Composition is skewed to pro residues over residues 346–369 (VHPPPGMLRFPPPPPPLDMHPPHP) and 378–403 (PRPPYGPPPGPPPMMRPPLPPGPPPS).

As to expression, in seedlings, mostly expressed in the shoot apical meristem (SAM) and root tip.

It is found in the nucleus. Involved in the regulation of flowering time in both long and short days. The sequence is that of Protein EARLY FLOWERING 5 from Arabidopsis thaliana (Mouse-ear cress).